A 147-amino-acid chain; its full sequence is uncharacterized protein (147 aa).

Residues 63-79 traverse the membrane as a helical segment; the sequence is LFIVACSAVFATIAYIN.

This sequence belongs to the FUN14 family.

The protein resides in the membrane. This is an uncharacterized protein from Schizosaccharomyces pombe (strain 972 / ATCC 24843) (Fission yeast).